We begin with the raw amino-acid sequence, 595 residues long: Aspartate--tRNA(Asp/Asn) ligase (595 aa).

An L-aspartate-binding site is contributed by Glu175. The tract at residues 199–202 is aspartate; it reads QQYK. 2 residues coordinate L-aspartate: Arg221 and His454. 221 to 223 is an ATP binding site; that stretch reads RDE. An ATP-binding site is contributed by Glu488. Position 495 (Arg495) interacts with L-aspartate. ATP is bound at residue 540-543; the sequence is GIDR.

This sequence belongs to the class-II aminoacyl-tRNA synthetase family. Type 1 subfamily. Homodimer.

It is found in the cytoplasm. The enzyme catalyses tRNA(Asx) + L-aspartate + ATP = L-aspartyl-tRNA(Asx) + AMP + diphosphate. Aspartyl-tRNA synthetase with relaxed tRNA specificity since it is able to aspartylate not only its cognate tRNA(Asp) but also tRNA(Asn). Reaction proceeds in two steps: L-aspartate is first activated by ATP to form Asp-AMP and then transferred to the acceptor end of tRNA(Asp/Asn). This chain is Aspartate--tRNA(Asp/Asn) ligase, found in Sinorhizobium medicae (strain WSM419) (Ensifer medicae).